The sequence spans 255 residues: 4-diphosphocytidyl-2-C-methyl-D-erythritol kinase (255 aa).

Lys6 is an active-site residue. Residue 95 to 105 (PVCAGLGGGSS) coordinates ATP. The active site involves Asp137.

The protein belongs to the GHMP kinase family. IspE subfamily.

The enzyme catalyses 4-CDP-2-C-methyl-D-erythritol + ATP = 4-CDP-2-C-methyl-D-erythritol 2-phosphate + ADP + H(+). Its pathway is isoprenoid biosynthesis; isopentenyl diphosphate biosynthesis via DXP pathway; isopentenyl diphosphate from 1-deoxy-D-xylulose 5-phosphate: step 3/6. Catalyzes the phosphorylation of the position 2 hydroxy group of 4-diphosphocytidyl-2C-methyl-D-erythritol. This chain is 4-diphosphocytidyl-2-C-methyl-D-erythritol kinase, found in Campylobacter jejuni subsp. jejuni serotype O:23/36 (strain 81-176).